A 596-amino-acid chain; its full sequence is Zinc finger CCCH domain-containing protein 64 (596 aa).

Disordered regions lie at residues 243 to 263 (LSPT…PPKT) and 272 to 291 (DGAA…SQYW). C3H1-type zinc fingers lie at residues 303 to 331 (SQGE…HNAE) and 335 to 363 (QCRR…HEFQ).

The polypeptide is Zinc finger CCCH domain-containing protein 64 (Arabidopsis thaliana (Mouse-ear cress)).